A 251-amino-acid chain; its full sequence is tRNA1(Val) (adenine(37)-N6)-methyltransferase (251 aa).

This sequence belongs to the methyltransferase superfamily. tRNA (adenine-N(6)-)-methyltransferase family.

The protein localises to the cytoplasm. The catalysed reaction is adenosine(37) in tRNA1(Val) + S-adenosyl-L-methionine = N(6)-methyladenosine(37) in tRNA1(Val) + S-adenosyl-L-homocysteine + H(+). Functionally, specifically methylates the adenine in position 37 of tRNA(1)(Val) (anticodon cmo5UAC). The protein is tRNA1(Val) (adenine(37)-N6)-methyltransferase of Shewanella frigidimarina (strain NCIMB 400).